Here is a 674-residue protein sequence, read N- to C-terminus: MRTIFNAKIGDAAYIQDELSSSLSSSVASKFKEFSKRKRISDSFSDLSEELERIGLRQMRKRIKLEKSFERTPKKKVQTKKHLPPVRKKDSVKRRRIIIASPSDEEHDGKVQTNDDSSENKTEKPKNQSNCSSNASKLSEAAQLLNVSEEKSSISETELERSRQVALNELNKSERFNKTETQLDISVMEVDSSDHDEEEKTEKVGAKNNRSLYEIVDSDDEEEQDQDQSDAAKPAESENHSEIKKSTSFMDQMSGAKGNKSVYEIMDSYETEDPKEAGKNEESDKDKPAENGKSDKDKQAETEMSDEDKPSEIKSPSTIKKSIISTADEEALLAELASSDLSHLEKMFNPLQKSRRQSLHVPSPELAAKNPKLRRRSERVEVGNDFCPSQSFVDMVAEKKRQKNKRKRLSKSLSGAPEDLEEMEIKHERKRLKSSHGASTDSMEEDNENETMTVAEEHHSDGEVSNGEVPIEEKPTTSSEKPSASELPEEGNSAPPALKKDVKRLQAARQAVSHAVNLLAPPKATEAEPRTLSRKLSPQPPVVDKKSAKQKKKGKKKQKPQEASPLKSSDEENHGHRIRTNAGYVTVVDEPPTKVPIIELIKTSSGMVRVEPCTPKQKYFRELPPTPKMHGFREEPGPSGMSRKRAKHAAPKVEHNSAKQAALRFKEQIFARRS.

3 disordered regions span residues L65–K137, N168–K321, and Q352–V382. Over residues P73–I97 the composition is skewed to basic residues. Over residues N127 to K137 the composition is skewed to polar residues. Acidic residues predominate over residues V216–Q228. A compositionally biased stretch (basic and acidic residues) spans K233 to K245. At S248 the chain carries Phosphoserine. Over residues E272–E312 the composition is skewed to basic and acidic residues. 2 positions are modified to phosphoserine: S358 and S391. Disordered regions lie at residues M395–V585 and K618–K659. Basic residues predominate over residues K400–S410. Residue S414 is modified to Phosphoserine. Residues A548–Q558 are compositionally biased toward basic residues.

In Drosophila melanogaster (Fruit fly), this protein is Slender lobes-like protein.